The primary structure comprises 599 residues: uncharacterized protein (599 aa).

Positions methionine 1–serine 13 are enriched in low complexity. Disordered stretches follow at residues methionine 1–leucine 27 and tyrosine 41–asparagine 86. Positions lysine 14–leucine 27 are enriched in polar residues. The segment covering asparagine 44–serine 70 has biased composition (basic and acidic residues). Transmembrane regions (helical) follow at residues isoleucine 97–threonine 117, tryptophan 135–cysteine 155, isoleucine 162–glutamine 182, alanine 192–isoleucine 212, glycine 223–isoleucine 243, tryptophan 251–leucine 271, phenylalanine 290–glycine 310, isoleucine 321–phenylalanine 341, alanine 359–valine 379, valine 396–leucine 416, leucine 423–valine 443, valine 452–isoleucine 472, threonine 489–phenylalanine 509, and valine 552–lysine 572.

Belongs to the major facilitator superfamily. TCR/Tet family.

The protein localises to the membrane. This is an uncharacterized protein from Schizosaccharomyces pombe (strain 972 / ATCC 24843) (Fission yeast).